The chain runs to 635 residues: Probable Xaa-Pro aminopeptidase P (635 aa).

Positions 432, 443, 541, and 555 each coordinate Mn(2+).

It belongs to the peptidase M24B family. Requires Mn(2+) as cofactor.

The catalysed reaction is Release of any N-terminal amino acid, including proline, that is linked to proline, even from a dipeptide or tripeptide.. In terms of biological role, catalyzes the removal of a penultimate prolyl residue from the N-termini of peptides. The sequence is that of Probable Xaa-Pro aminopeptidase P (AMPP) from Arthroderma gypseum (strain ATCC MYA-4604 / CBS 118893) (Microsporum gypseum).